The primary structure comprises 50 residues: Toxic protein HokE (50 aa).

A helical membrane pass occupies residues 5–25 (YALAAVIVLCLTVLGFTLLVG).

The protein belongs to the Hok/Gef family.

It localises to the cell inner membrane. In terms of biological role, toxic component of a type I toxin-antitoxin (TA) system; if it expressed it could be neutralized by antisense antitoxin RNA SokE. This chain is Toxic protein HokE, found in Escherichia coli (strain K12).